A 210-amino-acid polypeptide reads, in one-letter code: MVGPSRLAGGGLLLLLLALLPVALDGKPAPPSQALHKAPAGGTKASQIMQVLLPESKKSWAARDRMVGPYNPAGGGGGHPSSCFGHKIDRISHSSGMGCGRRPNAPAGGTKASQIMQVLLPESKKSRAARDRMVGPDNRAGGGGGGGGGDSSRQQELAKKDQHNNCFGRRIDRISHSTDLGCRRRPNPPPAPTAAPLAVAQFNSKSSQVA.

The signal sequence occupies residues 1–26 (MVGPSRLAGGGLLLLLLALLPVALDG). Positions 83-99 (CFGHKIDRISHSSGMGC) are natriuretic peptide domain 1. Cys83 and Cys99 are disulfide-bonded. Positions 122 to 134 (ESKKSRAARDRMV) are enriched in basic and acidic residues. Residues 122–210 (ESKKSRAARD…QFNSKSSQVA (89 aa)) form a disordered region. The span at 140 to 150 (AGGGGGGGGGD) shows a compositional bias: gly residues. The span at 156–176 (ELAKKDQHNNCFGRRIDRISH) shows a compositional bias: basic and acidic residues. A natriuretic peptide domain 2 region spans residues 166-182 (CFGRRIDRISHSTDLGC). Cys166 and Cys182 are disulfide-bonded. Positions 201-210 (QFNSKSSQVA) are enriched in polar residues.

This sequence belongs to the natriuretic peptide family. As to expression, expressed by the venom gland.

The protein resides in the secreted. Functionally, natriuretic peptide that dose-dependently induces the rapid relaxation of rat aortic strips phenylephrine-precontracted. Acts by stimulating cGMP production in a dose-dependent manner (by probably activating NPR1 and/or NPR2). May also show potent hypotensive effects. The polypeptide is Natriuretic peptide BM026 (Bungarus multicinctus (Many-banded krait)).